A 182-amino-acid chain; its full sequence is ATP-dependent protease subunit HslV (182 aa).

Thr-10 is a catalytic residue. Na(+) is bound by residues Ala-166, Cys-169, and Ser-172.

This sequence belongs to the peptidase T1B family. HslV subfamily. A double ring-shaped homohexamer of HslV is capped on each side by a ring-shaped HslU homohexamer. The assembly of the HslU/HslV complex is dependent on binding of ATP.

It is found in the cytoplasm. The catalysed reaction is ATP-dependent cleavage of peptide bonds with broad specificity.. With respect to regulation, allosterically activated by HslU binding. In terms of biological role, protease subunit of a proteasome-like degradation complex believed to be a general protein degrading machinery. This Rickettsia typhi (strain ATCC VR-144 / Wilmington) protein is ATP-dependent protease subunit HslV.